Reading from the N-terminus, the 602-residue chain is Sodium- and chloride-dependent GABA transporter 2 (602 aa).

Residues 1 to 40 (MDNRVSGTTSNGETKPVCPVMEKVEEDGTLEREQWTNKME) are Cytoplasmic-facing. The next 3 membrane-spanning stretches (helical) occupy residues 41 to 61 (FVLS…FPYL), 68 to 88 (GAFF…VFFL), and 121 to 141 (IVSL…FYLF). Over 142 to 206 (SSFTTDLPWG…GIQHLGSLRW (65 aa)) the chain is Extracellular. Cys153 and Cys162 form a disulfide bridge. N-linked (GlcNAc...) asparagine glycans are attached at residues Asn169, Asn173, and Asn178. 2 consecutive transmembrane segments (helical) span residues 207-227 (ELVL…WKGV) and 233-253 (VVYF…IRGV). N-linked (GlcNAc...) asparagine glycosylation is present at Asn269. 7 helical membrane-spanning segments follow: residues 282–302 (AGTQ…ALGS), 319–339 (ILNS…LGFM), 366–386 (VVML…VVLL), 418–438 (ILIL…LTEG), 453–473 (GMCL…VYGA), 490–510 (PLIK…TFLF), and 528–548 (WWGD…IPAW). The Cytoplasmic portion of the chain corresponds to 549-602 (SIYKLRTLKGPLRERLRQLVCPAEDLPQKSQPELTSPATPMTSLLRLTELESNC). Thr587 is modified (phosphothreonine). Ser591 carries the phosphoserine modification.

This sequence belongs to the sodium:neurotransmitter symporter (SNF) (TC 2.A.22) family. SLC6A13 subfamily. In terms of tissue distribution, brain, retina, and peripheral tissues. Expressed in hepatocytes (at protein level).

The protein resides in the cell membrane. It is found in the basolateral cell membrane. The catalysed reaction is 4-aminobutanoate(out) + chloride(out) + 2 Na(+)(out) = 4-aminobutanoate(in) + chloride(in) + 2 Na(+)(in). It carries out the reaction taurine(out) + chloride(out) + 2 Na(+)(out) = taurine(in) + chloride(in) + 2 Na(+)(in). It catalyses the reaction beta-alanine(out) + chloride(out) + 2 Na(+)(out) = beta-alanine(in) + chloride(in) + 2 Na(+)(in). The enzyme catalyses hypotaurine(out) + chloride(out) + 2 Na(+)(out) = hypotaurine(in) + chloride(in) + 2 Na(+)(in). With respect to regulation, GABA transport is inhibited by beta-alanine, L-2,4-Diaminobutyric acid, hypotaurine and nipecotic acid. Taurine transport is inhibited by hypotaurine, beta-alanine and nipecotic acid. In terms of biological role, mediates sodium- and chloride-dependent transport of gamma-aminobutyric acid (GABA). Mediates transport of taurine and is the major taurine transporter in hepatocytes. Can also mediate transport of beta-alanine and hypotaurine. The chain is Sodium- and chloride-dependent GABA transporter 2 (Slc6a13) from Rattus norvegicus (Rat).